We begin with the raw amino-acid sequence, 188 residues long: Ubiquitin-conjugating enzyme E2-21 kDa (188 aa).

One can recognise a UBC core domain in the interval 3 to 182; the sequence is STEKRLLKEY…VHYYIAKYSA (180 aa). The active-site Glycyl thioester intermediate is C119.

This sequence belongs to the ubiquitin-conjugating enzyme family.

The catalysed reaction is S-ubiquitinyl-[E1 ubiquitin-activating enzyme]-L-cysteine + [E2 ubiquitin-conjugating enzyme]-L-cysteine = [E1 ubiquitin-activating enzyme]-L-cysteine + S-ubiquitinyl-[E2 ubiquitin-conjugating enzyme]-L-cysteine.. The protein operates within protein modification; protein ubiquitination. Its function is as follows. Catalyzes the covalent attachment of ubiquitin to other proteins. Essential for peroxisome biogenesis. Required for UBC4-independent ubiquitination of PEX5. In Pichia angusta (Yeast), this protein is Ubiquitin-conjugating enzyme E2-21 kDa (PEX4).